The sequence spans 539 residues: MAKQIKFSDDARKSMVEGINKLSDTVKVTLGPKGRNVVLDKEYGAPLITNDGVSIAREIELEDEYENMGAQLVKEVATKTNDVAGDGTTTATLLAQAIIREGLKNLAAGANPIVLQKGIKKAVEKSVEAIKARSHSVTTKEEIANVGSVSAADETIGKLIAEAMEKVGNNGVITVEESKSMGTTLNVVEGMEFDRGYVSPYMVSDSDKMVAAMEDPFILVTDRKITNIQDILPLLEQVVQQGKPLFIIAEDVEGEALATLVLNKIRGTFNCVAVKAPGFGDRRKEMLEDICILTGAQLITEDLGIELKDASFDMLGRARKVNVSKDKTTIVDGNGDQSKIEERINQIQNRIPETDSEYDREKLQERLAKLSGGVAVIEVGAATETELKERKLRIEDALAATRAAVEEGIVAGGGTILLDIIEEVEKLVDDVEGDEKTGVKIILKALEEPVKQIAINAGIDGSVIVENVKNKDKGIGFDAYKGEYVDMLKAGIVDPTKVTLSALQNAASVASLLLTTEAAVVTIKKDEPAMPQPGPGAYM.

ATP is bound by residues 29 to 32, 86 to 90, G413, and D494; these read TLGP and DGTTT.

It belongs to the chaperonin (HSP60) family. Forms a cylinder of 14 subunits composed of two heptameric rings stacked back-to-back. Interacts with the co-chaperonin GroES.

The protein resides in the cytoplasm. It catalyses the reaction ATP + H2O + a folded polypeptide = ADP + phosphate + an unfolded polypeptide.. Functionally, together with its co-chaperonin GroES, plays an essential role in assisting protein folding. The GroEL-GroES system forms a nano-cage that allows encapsulation of the non-native substrate proteins and provides a physical environment optimized to promote and accelerate protein folding. The chain is Chaperonin GroEL from Finegoldia magna (strain ATCC 29328 / DSM 20472 / WAL 2508) (Peptostreptococcus magnus).